A 280-amino-acid chain; its full sequence is MAAGSGSGSNPKDYQDPPPAPLVDTGELGKWSLYRAAIAEFTATLLLVCISVSTVIGEKRQSGEGGAGVLGIAWAFGGLIFVLVYCTAGISGGHMNPAVTFAMVLARRVSLPRAALYTMAQCVGAVCGAGLARAMHGGGQYARHGGGANELAAGYSAGAGVVAEMVGTFVLVYTVFSATDPKRKARDSHVPVLAPLPIGLAVLVVHLATIPITGTGINPARSLGPALVLGLGTTKAWSHLWIFWVGPFAGAAAAMIYHHYILRGAAAKAFASSSYRSPHF.

The disordered stretch occupies residues 1 to 21 (MAAGSGSGSNPKDYQDPPPAP). The next 2 membrane-spanning stretches (helical) occupy residues 36–56 (AAIA…STVI) and 70–92 (LGIA…GISG). Residues 96-98 (NPA) carry the NPA 1 motif. A run of 3 helical transmembrane segments spans residues 113 to 135 (RAAL…ARAM), 156 to 176 (SAGA…YTVF), and 192 to 212 (VLAP…TIPI). An NPA 2 motif is present at residues 218–220 (NPA). Residues 236-256 (AWSHLWIFWVGPFAGAAAAMI) traverse the membrane as a helical segment.

Belongs to the MIP/aquaporin (TC 1.A.8) family. PIP (TC 1.A.8.11) subfamily. Expressed in leaves and at lower levels in roots.

Its subcellular location is the cell membrane. In terms of biological role, aquaporins facilitate the transport of water and small neutral solutes across cell membranes. This chain is Probable aquaporin PIP2-8 (PIP2-8), found in Oryza sativa subsp. japonica (Rice).